The sequence spans 410 residues: Cysteine desulfurase (410 aa).

Lysine 227 carries the post-translational modification N6-(pyridoxal phosphate)lysine. Residue cysteine 365 is the Cysteine persulfide intermediate of the active site.

The protein belongs to the class-V pyridoxal-phosphate-dependent aminotransferase family. Csd subfamily. In terms of assembly, homodimer. Interacts with SufE and the SufBCD complex composed of SufB, SufC and SufD. The interaction with SufE is required to mediate the direct transfer of the sulfur atom from the S-sulfanylcysteine. Requires pyridoxal 5'-phosphate as cofactor.

The protein resides in the cytoplasm. It catalyses the reaction (sulfur carrier)-H + L-cysteine = (sulfur carrier)-SH + L-alanine. It carries out the reaction L-selenocysteine + AH2 = hydrogenselenide + L-alanine + A + H(+). The protein operates within cofactor biosynthesis; iron-sulfur cluster biosynthesis. Its function is as follows. Cysteine desulfurases mobilize the sulfur from L-cysteine to yield L-alanine, an essential step in sulfur metabolism for biosynthesis of a variety of sulfur-containing biomolecules. Component of the suf operon, which is activated and required under specific conditions such as oxidative stress and iron limitation. Acts as a potent selenocysteine lyase in vitro, that mobilizes selenium from L-selenocysteine. Selenocysteine lyase activity is however unsure in vivo. The chain is Cysteine desulfurase from Wigglesworthia glossinidia brevipalpis.